A 126-amino-acid polypeptide reads, in one-letter code: NADPH-dependent 7-cyano-7-deazaguanine reductase (126 aa).

Cys-40 (thioimide intermediate) is an active-site residue. The active-site Proton donor is the Asp-47. Substrate contacts are provided by residues 62–64 (IEL) and 81–82 (HE).

Belongs to the GTP cyclohydrolase I family. QueF type 1 subfamily.

The protein localises to the cytoplasm. The catalysed reaction is 7-aminomethyl-7-carbaguanine + 2 NADP(+) = 7-cyano-7-deazaguanine + 2 NADPH + 3 H(+). The protein operates within tRNA modification; tRNA-queuosine biosynthesis. Catalyzes the NADPH-dependent reduction of 7-cyano-7-deazaguanine (preQ0) to 7-aminomethyl-7-deazaguanine (preQ1). The sequence is that of NADPH-dependent 7-cyano-7-deazaguanine reductase from Campylobacter jejuni subsp. doylei (strain ATCC BAA-1458 / RM4099 / 269.97).